The primary structure comprises 104 residues: MSTYAIIKTGGKQVKVEVGQAIYVEKLDVEAGAEVTFNEVVLVGGETTKVGTPVVEGATVVGTVEKQGKQKKVVSYKYKPKKGSHRKQGHRQPYTKVVINAINA.

The protein belongs to the bacterial ribosomal protein bL21 family. In terms of assembly, part of the 50S ribosomal subunit. Contacts protein L20.

Its function is as follows. This protein binds to 23S rRNA in the presence of protein L20. The polypeptide is Large ribosomal subunit protein bL21 (Streptococcus agalactiae serotype Ia (strain ATCC 27591 / A909 / CDC SS700)).